A 54-amino-acid polypeptide reads, in one-letter code: Ribulose bisphosphate carboxylase large chain (54 aa).

A propeptide spanning residues 1–2 (MS) is cleaved from the precursor. Pro3 carries the post-translational modification N-acetylproline. Lys14 bears the N6,N6,N6-trimethyllysine mark.

It belongs to the RuBisCO large chain family. Type I subfamily. Heterohexadecamer of 8 large chains and 8 small chains.

It is found in the plastid. The protein resides in the chloroplast. It carries out the reaction 2 (2R)-3-phosphoglycerate + 2 H(+) = D-ribulose 1,5-bisphosphate + CO2 + H2O. It catalyses the reaction D-ribulose 1,5-bisphosphate + O2 = 2-phosphoglycolate + (2R)-3-phosphoglycerate + 2 H(+). RuBisCO catalyzes two reactions: the carboxylation of D-ribulose 1,5-bisphosphate, the primary event in carbon dioxide fixation, as well as the oxidative fragmentation of the pentose substrate in the photorespiration process. Both reactions occur simultaneously and in competition at the same active site. This chain is Ribulose bisphosphate carboxylase large chain (rbcL), found in Geum borisii (Avens).